Consider the following 202-residue polypeptide: Putative chromophore lyase CpcV (202 aa).

The protein belongs to the CpcS/CpeS biliprotein lyase family.

Covalently attaches a chromophore to Cys residue(s) of phycobiliproteins. The chain is Putative chromophore lyase CpcV (cpcV) from Picosynechococcus sp. (strain ATCC 27264 / PCC 7002 / PR-6) (Agmenellum quadruplicatum).